Reading from the N-terminus, the 1038-residue chain is Zinc finger protein 628 (1038 aa).

The tract at residues 1–31 is disordered; sequence MAGSHVDMAPASTTEGTGEKPGPTAPAPTPA. Low complexity predominate over residues 13 to 22; sequence TTEGTGEKPG. 6 consecutive C2H2-type zinc fingers follow at residues 34–56, 62–84, 90–112, 118–140, 146–168, and 174–196; these read YECG…QRTH, YKCP…QRGH, YQCP…RSVH, FTCG…LRQH, YPCP…RHVH, and YTCG…QRVH. At threonine 197 the chain carries Phosphothreonine. The C2H2-type 7 zinc finger occupies 202–224; it reads FRCPLCPKTFTHSSNLLLHHRTH. Disordered stretches follow at residues 220-242 and 254-273; these read HHRT…ETSR and LQPR…PPVV. Composition is skewed to pro residues over residues 227–237 and 257–273; these read APGPAPAPAPP and RSPP…PPVV. 7 C2H2-type zinc fingers span residues 346 to 368, 376 to 398, 446 to 468, 474 to 496, 502 to 524, 530 to 552, and 558 to 580; these read FACL…QHSH, FRCG…QQCH, YKCA…LRDH, YQCG…QRVH, FTCG…LRLH, YACT…RHVH, and HSCS…QRVH. The residue at position 581 (threonine 581) is a Phosphothreonine. 2 C2H2-type zinc fingers span residues 586–608 and 614–636; these read FRCP…QRTH and FACP…LRTH. 2 disordered regions span residues 637 to 661 and 717 to 763; these read TPAT…LAAA and PSSV…AGQG. The span at 723-733 shows a compositional bias: pro residues; sequence PTPPPPPPPPK. Positions 734 to 756 are enriched in low complexity; it reads VILLPPASAGGPGSGAARPGPRS. 4 tandem repeats follow at residues 811–821, 822–832, 833–843, and 844–854. The tract at residues 811 to 854 is 4 X 11 AA tandem repeats of VQLQP-[AL]-[QT]-[EG]-[VQ]-[ATV]-[ST]; that stretch reads VQLQPAQEVATVQLQPAQEVTTVQLQPAQEVTTVQLQPLTGQVS. An interaction with TAF4B region spans residues 922-1038; it reads DGEQTRLCVQ…LPAVQLVHTF (117 aa).

In terms of assembly, interacts with TAF4B. In terms of tissue distribution, expressed widely in testis, in both germline and somatic cells. Seems to have particularly strong expression in meiotic spermatocytes, postmeiotic round spermatids and Sertoli cells. Not detected in elongating spermatids or mature sperm (at protein level). Expressed in testis, ovary, spleen, lung, brain, liver and kidney. Expressed in D3 embryonic stem cells and F9 embryonal carcinoma cells.

It is found in the nucleus. Transcriptional activator. Binds DNA on GT-box consensus sequence 5'-TTGGTT-3'. Plays a role in spermiogenesis. In Mus musculus (Mouse), this protein is Zinc finger protein 628.